The sequence spans 493 residues: MEKKLKSWQGWLLSGGSMVVVFVLGLCVSALMERRAEVASIFNNRKTVIKGIEARNELFKDDFPREYQTWTETAKTDFESEFNGNVAVDALEKRPEMVILWAGYAFSKDYSTPRGHMHAIEDITASLRTGSPAGPHDGPQPSTCWTCKSPDVPRMMEALGVDSFYNNKWAAFGDEIVNPIGCSDCHDPETMNLHISRPALIEAFQRQGKDITKATPQEMRSLVCAQCHVEYYFKGDGKYLTFPWDKGFTVEDMEAYYDEAGFYDYIHKLSRTPILKAQHPDYEIAQMGIHGQRGVSCADCHMPYKSEGGVKFSDHHIQSPLAMIDRTCQTCHRESEETLRNNVYERQRKANEIRNRLEQELAKAHIEAKFAWDKGATEDQMKDVLALIRQAQWRWDFGVASHGGSFHAPQEIQRILSHGLDRAMQARLAVSKVLAKHGYTEDVPMPDISTKAKAQEYIGLDMDAERAAKEKFLKTTVPAWLEKAKANGRLAQK.

A signal peptide spans 1–25 (MEKKLKSWQGWLLSGGSMVVVFVLG). Position 116 (histidine 116) interacts with heme c. 3 residues coordinate heme: cysteine 144, cysteine 147, and lysine 148. Cysteine 182, cysteine 185, histidine 186, cysteine 224, cysteine 227, and histidine 228 together coordinate heme c. Glutamate 230, tyrosine 231, lysine 276, and glutamine 278 together coordinate Ca(2+). Tyrosine 231 contacts substrate. Histidine 279 lines the substrate pocket. The heme c site is built by histidine 290, cysteine 297, cysteine 300, histidine 301, histidine 315, cysteine 328, cysteine 331, histidine 332, and histidine 407.

The protein belongs to the cytochrome c-552 family. It depends on Ca(2+) as a cofactor. The cofactor is heme c.

It localises to the periplasm. The enzyme catalyses 6 Fe(III)-[cytochrome c] + NH4(+) + 2 H2O = 6 Fe(II)-[cytochrome c] + nitrite + 8 H(+). It participates in nitrogen metabolism; nitrate reduction (assimilation). Its function is as follows. Catalyzes the reduction of nitrite to ammonia, consuming six electrons in the process. The sequence is that of Cytochrome c-552 from Bacteroides thetaiotaomicron (strain ATCC 29148 / DSM 2079 / JCM 5827 / CCUG 10774 / NCTC 10582 / VPI-5482 / E50).